A 352-amino-acid chain; its full sequence is Nodal homolog 4-B (352 aa).

The signal sequence occupies residues 1–18 (MHLYFSCFILLFVPGGKS). The propeptide occupies 19 to 278 (LGINSHLKHM…TIANSRRHRR (260 aa)). N-linked (GlcNAc...) asparagine glycans are attached at residues Asn30, Asn37, Asn199, and Asn238. The disordered stretch occupies residues 197 to 223 (GKNHSEGHMKQPKKLHRAKSAERRYQQ).

Belongs to the TGF-beta family. In terms of assembly, homodimer; disulfide-linked.

The protein localises to the secreted. Its function is as follows. Cooperation and regulatory loops of multiple nodals are essential for mesendoderm patterning in early embryos. Plays a role in mesoderm formation and may be required for neural development. This is Nodal homolog 4-B (nodal4-b) from Xenopus laevis (African clawed frog).